The primary structure comprises 101 residues: Urease subunit beta (101 aa).

It belongs to the urease beta subunit family. Heterotrimer of UreA (gamma), UreB (beta) and UreC (alpha) subunits. Three heterotrimers associate to form the active enzyme.

It localises to the cytoplasm. It catalyses the reaction urea + 2 H2O + H(+) = hydrogencarbonate + 2 NH4(+). It functions in the pathway nitrogen metabolism; urea degradation; CO(2) and NH(3) from urea (urease route): step 1/1. The sequence is that of Urease subunit beta from Ralstonia pickettii (strain 12J).